Consider the following 528-residue polypeptide: PC4 and SFRS1-interacting protein (528 aa).

The region spanning 7–64 (PGDLIFAKMKGYPHWPARVDEVPDGAVKPPTNKLPIFFFGTHETAFLGPKDIFPYSEN) is the PWWP domain. The disordered stretch occupies residues 61-348 (YSENKEKYGK…EKKRETSMDS (288 aa)). Lys75 participates in a covalent cross-link: Glycyl lysine isopeptide (Lys-Gly) (interchain with G-Cter in SUMO2). Over residues 92–106 (FSSQQASTKQSNASS) the composition is skewed to polar residues. Phosphoserine occurs at positions 102, 105, and 106. Residues 113 to 135 (KETNVSKEDTDQEEKASNEDVTK) show a composition bias toward basic and acidic residues. 2 positions are modified to phosphothreonine: Thr115 and Thr122. Ser129 carries the phosphoserine modification. Thr141 carries the post-translational modification Phosphothreonine. Over residues 144-153 (AARRGRKRKA) the composition is skewed to basic residues. A Nuclear localization signal motif is present at residues 146–156 (RRGRKRKAEKQ). Residues Ser176 and Ser205 each carry the phosphoserine modification. The segment covering 212 to 260 (DEDKSKKKGPEEKQPKKQLKKEEEGQKEEEKPRKEPDKKEGKKEVESKR) has biased composition (basic and acidic residues). The residue at position 270 (Ser270) is a Phosphoserine. Thr271 is subject to Phosphothreonine. Phosphoserine occurs at positions 272 and 274. Basic residues predominate over residues 285–300 (KRKGGRNFQAAHRRNM). The span at 303 to 348 (GQHEKEAGDRKRKQEEQMETEQQNKDEGKKPEVKKVEKKRETSMDS) shows a compositional bias: basic and acidic residues. Coiled coils occupy residues 306–332 (EKEA…EGKK) and 369–393 (NRCI…KHTE). The tract at residues 338 to 415 (VEKKRETSMD…VSQVIMEKST (78 aa)) is integrase-binding domain (IBD). Ser432 carries the post-translational modification Phosphoserine. A Phosphothreonine modification is found at Thr435. Ser441 carries the phosphoserine modification. Over residues 444–471 (EQRQHEEANKTKDQGKKGPNKKLEKEPT) the composition is skewed to basic and acidic residues. The interval 444-528 (EQRQHEEANK…ISLKESTLDN (85 aa)) is disordered. The segment covering 472-492 (GTKSLNGGSDAQESNHPQHNG) has biased composition (polar residues). The span at 496 to 528 (EDGKDSREASSKTKPPGEEREAEISLKESTLDN) shows a compositional bias: basic and acidic residues. Position 515 is a citrulline (Arg515). Residue Ser520 is modified to Phosphoserine. The residue at position 525 (Thr525) is a Phosphothreonine.

This sequence belongs to the HDGF family. As to quaternary structure, monomer. Interacts with IFRD1/PC4. Interacts (via IBD domain) with POGZ (via IBM motif) and CDCA7L (via IBM motifs). Interacts (via IBD domain) with KMT2A (via IBM motifs) with a moderate affinity whereas interacts with the KMT2A-MEN1 complex with a greater affinity; MEN1 enhances interaction of KMT2A with PSIP1. Interacts (via IBD domain) with IWS1 (via IBM motif), MED1 (via IBM motif) and DBF4 (via IBM motifs). Citrullinated by PADI4.

It localises to the nucleus. Its function is as follows. Transcriptional coactivator involved in neuroepithelial stem cell differentiation and neurogenesis. Involved in particular in lens epithelial cell gene regulation and stress responses. May play an important role in lens epithelial to fiber cell terminal differentiation. May play a protective role during stress-induced apoptosis. The protein is PC4 and SFRS1-interacting protein (Psip1) of Mus musculus (Mouse).